Consider the following 178-residue polypeptide: Adenine phosphoribosyltransferase (178 aa).

The protein belongs to the purine/pyrimidine phosphoribosyltransferase family. As to quaternary structure, homodimer.

It is found in the cytoplasm. It catalyses the reaction AMP + diphosphate = 5-phospho-alpha-D-ribose 1-diphosphate + adenine. Its pathway is purine metabolism; AMP biosynthesis via salvage pathway; AMP from adenine: step 1/1. In terms of biological role, catalyzes a salvage reaction resulting in the formation of AMP, that is energically less costly than de novo synthesis. The chain is Adenine phosphoribosyltransferase from Cereibacter sphaeroides (strain ATCC 17029 / ATH 2.4.9) (Rhodobacter sphaeroides).